A 65-amino-acid polypeptide reads, in one-letter code: Large ribosomal subunit protein bL35 (65 aa).

A disordered region spans residues 1–51; the sequence is MPKMKTNRAAAKRFKKTANGGLKSANAYTSHRFHGKTKKQRRQLRGTDMMD. Over residues 31-44 the composition is skewed to basic residues; that stretch reads HRFHGKTKKQRRQL.

The protein belongs to the bacterial ribosomal protein bL35 family.

This Pediococcus pentosaceus (strain ATCC 25745 / CCUG 21536 / LMG 10740 / 183-1w) protein is Large ribosomal subunit protein bL35.